A 541-amino-acid chain; its full sequence is Protein wntless homolog (541 aa).

Over 1 to 15 (MAGAIIENMSTKKLC) the chain is Cytoplasmic. A helical membrane pass occupies residues 16-36 (IVGGILLVFQIIAFLVGGLIA). The Lumenal segment spans residues 37–232 (PGPTTAVSYM…GIHQNGGFTK (196 aa)). The tract at residues 101–232 (MEMSPWFQFM…GIHQNGGFTK (132 aa)) is interaction with Wnt proteins. Residues 233 to 253 (VWFAMKTFLTPSIFIIMVWYW) form a helical membrane-spanning segment. Topologically, residues 254–268 (RRITMMSRPPVLLEK) are cytoplasmic. A helical membrane pass occupies residues 269-289 (VIFALGISMTFINIPVEWFSI). Topologically, residues 290–303 (GFDWTWMLLFGDIR) are lumenal. Residues 304 to 324 (QGIFYAMLLSFWIIFCGEHMM) traverse the membrane as a helical segment. The Cytoplasmic portion of the chain corresponds to 325-331 (DQHERNH). Residues 332 to 352 (IAGYWKQVGPIAVGSFCLFIF) form a helical membrane-spanning segment. Topologically, residues 353–380 (DMCERGVQLTNPFYSIWTTDIGTELAMA) are lumenal. The chain crosses the membrane as a helical span at residues 381 to 401 (FIIVAGICLCLYFLFLCFMVF). Topologically, residues 402-431 (QVFRNISGKQSSLPAMSKVRRLHYEGLIFR) are cytoplasmic. The helical transmembrane segment at 432–452 (FKFLMLITLACAAMTVIFFIV) threads the bilayer. Topologically, residues 453 to 471 (SQVTEGHWKWGGVTVQVNS) are lumenal. A helical transmembrane segment spans residues 472 to 492 (AFFTGIYGMWNLYVFALMFLY). Topologically, residues 493–541 (APSHKNYGEDQSNGDLGVHSGEELQLTTTITHVDGPTEIYKLTRKEAQE) are cytoplasmic.

It belongs to the wntless family. In terms of assembly, interacts with WNT3A. Interacts with WNT1, WNT3 and WNT5A. In terms of processing, N-glycosylated.

It localises to the golgi apparatus membrane. It is found in the cytoplasmic vesicle membrane. The protein localises to the cell membrane. The protein resides in the endoplasmic reticulum membrane. Its subcellular location is the early endosome membrane. In terms of biological role, regulates Wnt proteins sorting and secretion in a feedback regulatory mechanism. This reciprocal interaction plays a key role in the regulation of expression, subcellular location, binding and organelle-specific association of Wnt proteins. Plays also an important role in establishment of the anterior-posterior body axis formation during development. The chain is Protein wntless homolog (WLS) from Homo sapiens (Human).